Consider the following 104-residue polypeptide: Large ribosomal subunit protein uL24 (104 aa).

It belongs to the universal ribosomal protein uL24 family. In terms of assembly, part of the 50S ribosomal subunit.

One of two assembly initiator proteins, it binds directly to the 5'-end of the 23S rRNA, where it nucleates assembly of the 50S subunit. Functionally, one of the proteins that surrounds the polypeptide exit tunnel on the outside of the subunit. The polypeptide is Large ribosomal subunit protein uL24 (Shewanella sp. (strain W3-18-1)).